Here is a 157-residue protein sequence, read N- to C-terminus: Ribosomal RNA large subunit methyltransferase H (157 aa).

S-adenosyl-L-methionine contacts are provided by residues leucine 73, glycine 105, and 124-129 (MSKMTF).

It belongs to the RNA methyltransferase RlmH family. In terms of assembly, homodimer.

Its subcellular location is the cytoplasm. The enzyme catalyses pseudouridine(1915) in 23S rRNA + S-adenosyl-L-methionine = N(3)-methylpseudouridine(1915) in 23S rRNA + S-adenosyl-L-homocysteine + H(+). Functionally, specifically methylates the pseudouridine at position 1915 (m3Psi1915) in 23S rRNA. The chain is Ribosomal RNA large subunit methyltransferase H from Bacteroides fragilis (strain ATCC 25285 / DSM 2151 / CCUG 4856 / JCM 11019 / LMG 10263 / NCTC 9343 / Onslow / VPI 2553 / EN-2).